The chain runs to 210 residues: Large ribosomal subunit protein uL3 (210 aa).

The interval 125 to 151 (RHGQSRGPMSHGSRYHRRPGSMGPVAP) is disordered.

This sequence belongs to the universal ribosomal protein uL3 family. Part of the 50S ribosomal subunit. Forms a cluster with proteins L14 and L19.

In terms of biological role, one of the primary rRNA binding proteins, it binds directly near the 3'-end of the 23S rRNA, where it nucleates assembly of the 50S subunit. The sequence is that of Large ribosomal subunit protein uL3 from Bacillus cereus (strain Q1).